We begin with the raw amino-acid sequence, 60 residues long: Defensin MGD-1 (60 aa).

Intrachain disulfides connect C4-C25, C10-C33, C14-C35, and C21-C38. Residue W28 is modified to 3-hydroxytryptophan. Residue C38 is modified to Cysteine amide. A propeptide spanning residues G39 to F60 is cleaved from the precursor.

This sequence belongs to the invertebrate defensin family. Type 2 subfamily. The hydroxylation of the Trp-28 is not important for the antibacterial activity. As to expression, abundantly expressed in hemocytes.

Its subcellular location is the secreted. In terms of biological role, active against both Gram-positive and Gram-negative bacteria but is not cytotoxic towards human erythrocytes or protozoa. The sequence is that of Defensin MGD-1 (FH3) from Mytilus galloprovincialis (Mediterranean mussel).